A 363-amino-acid polypeptide reads, in one-letter code: 3-dehydroquinate synthase (363 aa).

NAD(+) contacts are provided by residues 134 to 135 (TT), K147, and K156. E189, H254, and H271 together coordinate Zn(2+).

The protein belongs to the sugar phosphate cyclases superfamily. Dehydroquinate synthase family. Co(2+) is required as a cofactor. Requires Zn(2+) as cofactor. The cofactor is NAD(+).

The protein resides in the cytoplasm. The catalysed reaction is 7-phospho-2-dehydro-3-deoxy-D-arabino-heptonate = 3-dehydroquinate + phosphate. It functions in the pathway metabolic intermediate biosynthesis; chorismate biosynthesis; chorismate from D-erythrose 4-phosphate and phosphoenolpyruvate: step 2/7. Its function is as follows. Catalyzes the conversion of 3-deoxy-D-arabino-heptulosonate 7-phosphate (DAHP) to dehydroquinate (DHQ). The sequence is that of 3-dehydroquinate synthase from Prochlorococcus marinus (strain MIT 9215).